The sequence spans 293 residues: Putative phosphoenolpyruvate synthase regulatory protein (293 aa).

Position 173–180 (Gly-173–Thr-180) interacts with ADP.

This sequence belongs to the pyruvate, phosphate/water dikinase regulatory protein family. PSRP subfamily.

The enzyme catalyses [pyruvate, water dikinase] + ADP = [pyruvate, water dikinase]-phosphate + AMP + H(+). It carries out the reaction [pyruvate, water dikinase]-phosphate + phosphate + H(+) = [pyruvate, water dikinase] + diphosphate. Its function is as follows. Bifunctional serine/threonine kinase and phosphorylase involved in the regulation of the phosphoenolpyruvate synthase (PEPS) by catalyzing its phosphorylation/dephosphorylation. This is Putative phosphoenolpyruvate synthase regulatory protein from Photorhabdus laumondii subsp. laumondii (strain DSM 15139 / CIP 105565 / TT01) (Photorhabdus luminescens subsp. laumondii).